The sequence spans 115 residues: MDKKKARLRRAASTRHKLQNSTRLVVHRTIRHIYAQIIAPHNSKVLIAASTVEKMIANQLKNTGNKEAAVAVGKKIAERALAQGIYNVSFDRSGYQYHGRVQALAEAAREVGLNF.

This sequence belongs to the universal ribosomal protein uL18 family. As to quaternary structure, part of the 50S ribosomal subunit; part of the 5S rRNA/L5/L18/L25 subcomplex. Contacts the 5S and 23S rRNAs.

In terms of biological role, this is one of the proteins that bind and probably mediate the attachment of the 5S RNA into the large ribosomal subunit, where it forms part of the central protuberance. This Baumannia cicadellinicola subsp. Homalodisca coagulata protein is Large ribosomal subunit protein uL18.